A 119-amino-acid polypeptide reads, in one-letter code: Large ribosomal subunit protein uL18 (119 aa).

Residues 1–20 (MSQIDKAARRQKIKARSRAT) are disordered. The span at 9 to 19 (RRQKIKARSRA) shows a compositional bias: basic residues.

This sequence belongs to the universal ribosomal protein uL18 family. Part of the 50S ribosomal subunit; part of the 5S rRNA/L5/L18/L25 subcomplex. Contacts the 5S and 23S rRNAs.

Functionally, this is one of the proteins that bind and probably mediate the attachment of the 5S RNA into the large ribosomal subunit, where it forms part of the central protuberance. This chain is Large ribosomal subunit protein uL18, found in Chlorobaculum parvum (strain DSM 263 / NCIMB 8327) (Chlorobium vibrioforme subsp. thiosulfatophilum).